Reading from the N-terminus, the 1404-residue chain is DNA-directed RNA polymerase subunit beta' (1404 aa).

4 residues coordinate Zn(2+): Cys-70, Cys-72, Cys-85, and Cys-88. Residues Asp-460, Asp-462, and Asp-464 each contribute to the Mg(2+) site. The Zn(2+) site is built by Cys-814, Cys-888, Cys-895, and Cys-898.

The protein belongs to the RNA polymerase beta' chain family. In terms of assembly, the RNAP catalytic core consists of 2 alpha, 1 beta, 1 beta' and 1 omega subunit. When a sigma factor is associated with the core the holoenzyme is formed, which can initiate transcription. It depends on Mg(2+) as a cofactor. Requires Zn(2+) as cofactor.

It carries out the reaction RNA(n) + a ribonucleoside 5'-triphosphate = RNA(n+1) + diphosphate. Functionally, DNA-dependent RNA polymerase catalyzes the transcription of DNA into RNA using the four ribonucleoside triphosphates as substrates. The sequence is that of DNA-directed RNA polymerase subunit beta' from Buchnera aphidicola subsp. Baizongia pistaciae (strain Bp).